A 709-amino-acid chain; its full sequence is F-box only protein 40 (709 aa).

The segment at 53–112 adopts a TRAF-type zinc-finger fold; sequence EHQLLCPLEQVPCLNSEYGCPLSMSRHKLAKHLQVCPASVVCCSMEWNRWPNVDSETTLH. A disordered region spans residues 232–280; that stretch reads TNSSASCESKNKNDSEKEQISSGHNMVEGEGAPKKKEPQENQKQQDVRT. 2 stretches are compositionally biased toward basic and acidic residues: residues 240–250 and 262–277; these read SKNKNDSEKEQ and GAPK…KQQD. Residues 570-624 enclose the F-box domain; sequence QNSLTSLPLEILKYIAGFLDSVSLAQLSQVSVLMRNICATLLQERGMVLLQWKKK.

Directly interacts with SKP1 and CUL1. As to expression, expressed only in heart and skeletal muscle.

The protein localises to the cytoplasm. In terms of biological role, probable substrate-recognition component of the SCF (SKP1-CUL1-F-box protein)-type E3 ubiquitin ligase complex that may function in myogenesis. This is F-box only protein 40 (FBXO40) from Homo sapiens (Human).